The primary structure comprises 316 residues: Leucine-rich repeat-containing protein 73 (316 aa).

LRR repeat units follow at residues 57 to 78, 86 to 106, 114 to 137, 145 to 166, 174 to 187, 202 to 223, and 231 to 250; these read SLAQ…KQLA, SIQS…ALLN, ALVA…CGLL, GLKE…SRLA, QVRV…PLGD, TLEV…TLLD, and ALRS…QQQI. Positions 257–296 are disordered; that stretch reads GEEEEEMAGGAADTQEWGRGREPAAHQRGGSSWKCPSDPN. Residues 272-281 show a composition bias toward basic and acidic residues; it reads EWGRGREPAA.

The chain is Leucine-rich repeat-containing protein 73 (Lrrc73) from Rattus norvegicus (Rat).